Reading from the N-terminus, the 189-residue chain is Crossover junction endodeoxyribonuclease RuvC (189 aa).

Catalysis depends on residues D8, E67, and D139. Positions 8, 67, and 139 each coordinate Mg(2+).

The protein belongs to the RuvC family. As to quaternary structure, homodimer which binds Holliday junction (HJ) DNA. The HJ becomes 2-fold symmetrical on binding to RuvC with unstacked arms; it has a different conformation from HJ DNA in complex with RuvA. In the full resolvosome a probable DNA-RuvA(4)-RuvB(12)-RuvC(2) complex forms which resolves the HJ. Requires Mg(2+) as cofactor.

Its subcellular location is the cytoplasm. The catalysed reaction is Endonucleolytic cleavage at a junction such as a reciprocal single-stranded crossover between two homologous DNA duplexes (Holliday junction).. Its function is as follows. The RuvA-RuvB-RuvC complex processes Holliday junction (HJ) DNA during genetic recombination and DNA repair. Endonuclease that resolves HJ intermediates. Cleaves cruciform DNA by making single-stranded nicks across the HJ at symmetrical positions within the homologous arms, yielding a 5'-phosphate and a 3'-hydroxyl group; requires a central core of homology in the junction. The consensus cleavage sequence is 5'-(A/T)TT(C/G)-3'. Cleavage occurs on the 3'-side of the TT dinucleotide at the point of strand exchange. HJ branch migration catalyzed by RuvA-RuvB allows RuvC to scan DNA until it finds its consensus sequence, where it cleaves and resolves the cruciform DNA. The protein is Crossover junction endodeoxyribonuclease RuvC of Histophilus somni (strain 129Pt) (Haemophilus somnus).